Reading from the N-terminus, the 629-residue chain is Dihydroxy-acid dehydratase 2 (629 aa).

Mg(2+) is bound at residue Asp-82. Cys-123 provides a ligand contact to [2Fe-2S] cluster. Positions 124 and 125 each coordinate Mg(2+). Lys-125 bears the N6-carboxylysine mark. A [2Fe-2S] cluster-binding site is contributed by Cys-197. Glu-493 is a Mg(2+) binding site. The active-site Proton acceptor is Ser-519. Residues 603-629 are disordered; that stretch reads DKGGVRRLPPDELGGPEAAFDTQTRAG.

It belongs to the IlvD/Edd family. In terms of assembly, homodimer. Requires [2Fe-2S] cluster as cofactor. Mg(2+) is required as a cofactor.

The catalysed reaction is (2R)-2,3-dihydroxy-3-methylbutanoate = 3-methyl-2-oxobutanoate + H2O. It catalyses the reaction (2R,3R)-2,3-dihydroxy-3-methylpentanoate = (S)-3-methyl-2-oxopentanoate + H2O. It participates in amino-acid biosynthesis; L-isoleucine biosynthesis; L-isoleucine from 2-oxobutanoate: step 3/4. The protein operates within amino-acid biosynthesis; L-valine biosynthesis; L-valine from pyruvate: step 3/4. Functions in the biosynthesis of branched-chain amino acids. Catalyzes the dehydration of (2R,3R)-2,3-dihydroxy-3-methylpentanoate (2,3-dihydroxy-3-methylvalerate) into 2-oxo-3-methylpentanoate (2-oxo-3-methylvalerate) and of (2R)-2,3-dihydroxy-3-methylbutanoate (2,3-dihydroxyisovalerate) into 2-oxo-3-methylbutanoate (2-oxoisovalerate), the penultimate precursor to L-isoleucine and L-valine, respectively. The chain is Dihydroxy-acid dehydratase 2 from Nocardia farcinica (strain IFM 10152).